Consider the following 118-residue polypeptide: Small ribosomal subunit protein uS13 (118 aa).

Positions 94 to 118 are disordered; it reads GLPLRGQRTKTNARTRKGPRKPIKK.

It belongs to the universal ribosomal protein uS13 family. In terms of assembly, part of the 30S ribosomal subunit. Forms a loose heterodimer with protein S19. Forms two bridges to the 50S subunit in the 70S ribosome.

Its function is as follows. Located at the top of the head of the 30S subunit, it contacts several helices of the 16S rRNA. In the 70S ribosome it contacts the 23S rRNA (bridge B1a) and protein L5 of the 50S subunit (bridge B1b), connecting the 2 subunits; these bridges are implicated in subunit movement. Contacts the tRNAs in the A and P-sites. The protein is Small ribosomal subunit protein uS13 of Cellvibrio japonicus (strain Ueda107) (Pseudomonas fluorescens subsp. cellulosa).